Here is a 97-residue protein sequence, read N- to C-terminus: Putative septation protein SpoVG (97 aa).

This sequence belongs to the SpoVG family.

In terms of biological role, could be involved in septation. In Borreliella afzelii (strain PKo) (Borrelia afzelii), this protein is Putative septation protein SpoVG.